The following is a 470-amino-acid chain: UDP-N-acetylmuramate--L-alanine ligase (470 aa).

Position 118 to 124 (118 to 124 (GTHGKTT)) interacts with ATP.

This sequence belongs to the MurCDEF family.

Its subcellular location is the cytoplasm. The enzyme catalyses UDP-N-acetyl-alpha-D-muramate + L-alanine + ATP = UDP-N-acetyl-alpha-D-muramoyl-L-alanine + ADP + phosphate + H(+). It functions in the pathway cell wall biogenesis; peptidoglycan biosynthesis. Cell wall formation. The sequence is that of UDP-N-acetylmuramate--L-alanine ligase from Cereibacter sphaeroides (strain KD131 / KCTC 12085) (Rhodobacter sphaeroides).